A 152-amino-acid chain; its full sequence is Succinate dehydrogenase [ubiquinone] cytochrome b small subunit B, mitochondrial (152 aa).

The N-terminal 21 residues, 1–21 (MATLLRVSSLCRANRASAFKS), are a transit peptide targeting the mitochondrion. The Mitochondrial matrix portion of the chain corresponds to 22 to 56 (LLIRPLPCLSQDLHMVQTSQIHTSPNHHAGSKAAS). A helical transmembrane segment spans residues 57 to 78 (MHWTGERALSVALLGLLPAAYL). Residues 79–83 (YPGAA) lie on the Mitochondrial intermembrane side of the membrane. The helical transmembrane segment at 84 to 104 (MDYSLAAALTLHGHWGLGQVV) threads the bilayer. His95 serves as a coordination point for heme b. The Mitochondrial matrix segment spans residues 105–113 (TDYVHGETK). Residue Tyr107 coordinates a ubiquinone. Residues 114–135 (IKMANTSLFALSALTFAGLCYF) traverse the membrane as a helical segment. The Mitochondrial intermembrane segment spans residues 136-152 (NYHDVGICKAVAMLWSL).

The protein belongs to the CybS family. In terms of assembly, component of complex II composed of four subunits: the flavoprotein (FP) SDHA, iron-sulfur protein (IP) SDHB, and a cytochrome b560 composed of SDHC and SDHD.

Its subcellular location is the mitochondrion inner membrane. It participates in carbohydrate metabolism; tricarboxylic acid cycle. Its function is as follows. Membrane-anchoring subunit of succinate dehydrogenase (SDH) that is involved in complex II of the mitochondrial electron transport chain and is responsible for transferring electrons from succinate to ubiquinone (coenzyme Q). SDH also oxidizes malate to the non-canonical enol form of oxaloacetate, enol-oxaloacetate. Enol-oxaloacetate, which is a potent inhibitor of the succinate dehydrogenase activity, is further isomerized into keto-oxaloacetate. This Xenopus laevis (African clawed frog) protein is Succinate dehydrogenase [ubiquinone] cytochrome b small subunit B, mitochondrial (sdhd-b).